The following is a 462-amino-acid chain: MDTKHFLPLDFSTQVNSSLTSPTGRGSMAAPSLHPSLGPGIGSPGQLHSPISTLSSPINGMGPPFSVISSPMGPHSMSVPTTPTLGFSTGSPQLSSPMNPVSSSEDIKPPLGLNGVLKVPAHPSGNMASFTKHICAICGDRSSGKHYGVYSCEGCKGFFKRTVRKDLTYTCRDNKDCLIDKRQRNRCQYCRYQKCLAMGMKREAVQEERQRGKDRNENEVESTSSANEDMPVERILEAELAVEPKTETYVEANMGLNPSSPNDPVTNICQAADKQLFTLVEWAKRIPHFSELPLDDQVILLRAGWNELLIASFSHRSIAVKDGILLATGLHVHRNSAHSAGVGAIFDRVLTELVSKMRDMQMDKTELGCLRAIVLFNPDSKGLSNPAEVEALREKVYASLEAYCKHKYPEQPGRFAKLLLRLPALRSIGLKCLEHLFFFKLIGDTPIDTFLMEMLEAPHQMT.

The segment at 1–107 (MDTKHFLPLD…MNPVSSSEDI (107 aa)) is disordered. A modulating region spans residues 1–134 (MDTKHFLPLD…GNMASFTKHI (134 aa)). Lysine 4 is covalently cross-linked (Glycyl lysine isopeptide (Lys-Gly) (interchain with G-Cter in SUMO2)). Polar residues predominate over residues 11–24 (FSTQVNSSLTSPTG). Phosphoserine occurs at positions 21 and 27. The segment covering 49–58 (SPISTLSSPI) has biased composition (polar residues). Residues serine 56 and serine 70 each carry the phosphoserine; by MAPK8 and MAPK9 modification. Residues 78–104 (SVPTTPTLGFSTGSPQLSSPMNPVSSS) show a composition bias toward polar residues. Threonine 82 carries the post-translational modification Phosphothreonine; by MAPK8 and MAPK9. Residue lysine 108 forms a Glycyl lysine isopeptide (Lys-Gly) (interchain with G-Cter in SUMO) linkage. Position 129 is a phosphoserine (serine 129). Cysteine 135 and cysteine 138 together coordinate Zn(2+). Residues 135–155 (CAICGDRSSGKHYGVYSCEGC) form an NR C4-type zinc finger. A DNA-binding region (nuclear receptor) is located at residues 135–200 (CAICGDRSSG…RYQKCLAMGM (66 aa)). An N6-acetyllysine; by EP300 modification is found at lysine 145. Zn(2+) is bound by residues cysteine 152 and cysteine 155. The tract at residues 160–165 (KRTVRK) is nuclear localization signal. Zn(2+) contacts are provided by cysteine 171, cysteine 177, cysteine 187, and cysteine 190. The NR C4-type zinc-finger motif lies at 171-195 (CRDNKDCLIDKRQRNRCQYCRYQKC). The interval 201 to 224 (KREAVQEERQRGKDRNENEVESTS) is hinge. The segment covering 206–218 (QEERQRGKDRNEN) has biased composition (basic and acidic residues). A disordered region spans residues 206-228 (QEERQRGKDRNENEVESTSSANE). The NR LBD domain occupies 227 to 458 (NEDMPVERIL…TFLMEMLEAP (232 aa)). Serine 259 is modified (phosphoserine). Residue serine 260 is modified to Phosphoserine; by MAPK8 and MAPK9. 2 residues coordinate 9-cis-retinoate: arginine 316 and alanine 327. All-trans-retinoate is bound by residues arginine 316 and alanine 327. The interval 348–368 (RVLTELVSKMRDMQMDKTELG) is required for nuclear export.

The protein belongs to the nuclear hormone receptor family. NR2 subfamily. In terms of assembly, homodimer. Heterodimer (via C-terminus) with RARA; required for ligand-dependent retinoic acid receptor transcriptional activity; association with RARA is enhanced by pulsatile shear stress. Heterodimer with PPARA (via the leucine-like zipper in the LBD); the interaction is required for PPARA transcriptional activity. Heterodimerizes with PPARG. Heterodimerizes (via NR LBD) with RARB. Heterodimerizes with NR1H4; the heterodimerization enhances the binding affinity for LXXLL motifs from coactivators. Interacts with NCOA3 and NCOA6 coactivators. Interacts with coactivator FAM120B. Interacts with coactivator PELP1, SENP6, SFPQ, DNTTIP2 and RNF8. Interacts with PRMT2. Interacts with ASXL1. Interacts with BHLHE40/DEC1, BHLHE41/DEC2, NCOR1 and NCOR2. Interacts in a ligand-dependent fashion with MED1 and NCOA1. Interacts with VDR. Interacts with EP300; the interaction is decreased by 9-cis retinoic acid. Heterodimer (via C-terminus) with NR4A1 (via DNA-binding domain); DNA-binding of the heterodimer is enhanced by 9-cis retinoic acid. NR4A1 competes with EP300 for interaction with RXRA and thereby attenuates EP300 mediated acetylation of RXRA. In the absence of hormonal ligand, interacts with TACC1. Interacts ith IGFBP3. As to quaternary structure, (Microbial infection) Interacts (via the DNA binding domain) with HCV core protein; the interaction enhances the transcriptional activities of the RXRA/RARA and the RXRA/PPARA heterodimers. Post-translationally, acetylated by EP300; acetylation enhances DNA binding and transcriptional activity. Phosphorylated on serine and threonine residues mainly in the N-terminal modulating domain. Constitutively phosphorylated on Ser-21 in the presence or absence of ligand. Under stress conditions, hyperphosphorylated by activated JNK on Ser-56, Ser-70, Thr-82 and Ser-260. Phosphorylated on Ser-27, in vitro, by PKA. This phosphorylation is required for repression of cAMP-mediated transcriptional activity of RARA. In terms of processing, ubiquitinated by UBR5, leading to its degradation: UBR5 specifically recognizes and binds ligand-bound RXRA when it is not associated with coactivators (NCOAs). In presence of NCOAs, the UBR5-degron is not accessible, preventing its ubiquitination and degradation. Post-translationally, sumoylation negatively regulates transcriptional activity. Desumoylated specifically by SENP6. As to expression, expressed in lung fibroblasts (at protein level). Expressed in monocytes. Highly expressed in liver, also found in kidney and brain.

The protein localises to the nucleus. The protein resides in the cytoplasm. It is found in the mitochondrion. Its function is as follows. Receptor for retinoic acid that acts as a transcription factor. Forms homo- or heterodimers with retinoic acid receptors (RARs) and binds to target response elements in response to their ligands, all-trans or 9-cis retinoic acid, to regulate gene expression in various biological processes. The RAR/RXR heterodimers bind to the retinoic acid response elements (RARE) composed of tandem 5'-AGGTCA-3' sites known as DR1-DR5 to regulate transcription. The high affinity ligand for retinoid X receptors (RXRs) is 9-cis retinoic acid. In the absence of ligand, the RXR-RAR heterodimers associate with a multiprotein complex containing transcription corepressors that induce histone deacetylation, chromatin condensation and transcriptional suppression. On ligand binding, the corepressors dissociate from the receptors and coactivators are recruited leading to transcriptional activation. Serves as a common heterodimeric partner for a number of nuclear receptors, such as RARA, RARB and PPARA. The RXRA/RARB heterodimer can act as a transcriptional repressor or transcriptional activator, depending on the RARE DNA element context. The RXRA/PPARA heterodimer is required for PPARA transcriptional activity on fatty acid oxidation genes such as ACOX1 and the P450 system genes. Together with RARA, positively regulates microRNA-10a expression, thereby inhibiting the GATA6/VCAM1 signaling response to pulsatile shear stress in vascular endothelial cells. Acts as an enhancer of RARA binding to RARE DNA element. May facilitate the nuclear import of heterodimerization partners such as VDR and NR4A1. Promotes myelin debris phagocytosis and remyelination by macrophages. Plays a role in the attenuation of the innate immune system in response to viral infections, possibly by negatively regulating the transcription of antiviral genes such as type I IFN genes. Involved in the regulation of calcium signaling by repressing ITPR2 gene expression, thereby controlling cellular senescence. This Homo sapiens (Human) protein is Retinoic acid receptor RXR-alpha (RXRA).